The primary structure comprises 72 residues: Translation initiation factor IF-1 (72 aa).

Positions 1–72 constitute an S1-like domain; that stretch reads MSKEDSFEME…SKGRITYRAR (72 aa).

This sequence belongs to the IF-1 family. As to quaternary structure, component of the 30S ribosomal translation pre-initiation complex which assembles on the 30S ribosome in the order IF-2 and IF-3, IF-1 and N-formylmethionyl-tRNA(fMet); mRNA recruitment can occur at any time during PIC assembly.

The protein localises to the cytoplasm. One of the essential components for the initiation of protein synthesis. Stabilizes the binding of IF-2 and IF-3 on the 30S subunit to which N-formylmethionyl-tRNA(fMet) subsequently binds. Helps modulate mRNA selection, yielding the 30S pre-initiation complex (PIC). Upon addition of the 50S ribosomal subunit IF-1, IF-2 and IF-3 are released leaving the mature 70S translation initiation complex. The protein is Translation initiation factor IF-1 of Pseudomonas syringae pv. tomato (strain ATCC BAA-871 / DC3000).